The following is a 192-amino-acid chain: Transmembrane protein 276 (192 aa).

The first 32 residues, 1-32 (MVSKPRNEWSTALSHLVLAGVSLHAAVSSVQS), serve as a signal peptide directing secretion. 4 helical membrane-spanning segments follow: residues 35–55 (GAAAGFLLQTLAAVIMLAPEL), 63–83 (AGAWVATVIGLPLLAFDFHWV), 92–112 (LLLGGGMVLAVAGDHLGPEGC), and 114–134 (VAGQAVLLVVAVTILIVAVFT).

It is found in the membrane. The protein is Transmembrane protein 276 of Rattus norvegicus (Rat).